Reading from the N-terminus, the 207-residue chain is MAVDYSLYLVTDRILVGPKDFLLSIRKALEGGVTLLQLREKETNSREFYDIGVKVKELAAEFGVPLIINDRVDLALALDADGVHVGQQDLPLAKVRNIIGPDKILGYSVSSLEEALQGERMGADYLGAGPVFPTGSKKDAAEAIGLAKLKEIKAGVSLPVVGIGGIGAANLRAVKETGIDGVSVISAILSQEDPCAAAKGLMDLWRN.

Residues Gln37 to Lys41 and Asn69 contribute to the 4-amino-2-methyl-5-(diphosphooxymethyl)pyrimidine site. 2 residues coordinate Mg(2+): Asp70 and Asp89. Ser108 is a 4-amino-2-methyl-5-(diphosphooxymethyl)pyrimidine binding site. Thr134–Ser136 is a 2-[(2R,5Z)-2-carboxy-4-methylthiazol-5(2H)-ylidene]ethyl phosphate binding site. Residue Lys137 coordinates 4-amino-2-methyl-5-(diphosphooxymethyl)pyrimidine. Residues Gly165 and Ile185–Ser186 each bind 2-[(2R,5Z)-2-carboxy-4-methylthiazol-5(2H)-ylidene]ethyl phosphate.

This sequence belongs to the thiamine-phosphate synthase family. Requires Mg(2+) as cofactor.

The enzyme catalyses 2-[(2R,5Z)-2-carboxy-4-methylthiazol-5(2H)-ylidene]ethyl phosphate + 4-amino-2-methyl-5-(diphosphooxymethyl)pyrimidine + 2 H(+) = thiamine phosphate + CO2 + diphosphate. It carries out the reaction 2-(2-carboxy-4-methylthiazol-5-yl)ethyl phosphate + 4-amino-2-methyl-5-(diphosphooxymethyl)pyrimidine + 2 H(+) = thiamine phosphate + CO2 + diphosphate. It catalyses the reaction 4-methyl-5-(2-phosphooxyethyl)-thiazole + 4-amino-2-methyl-5-(diphosphooxymethyl)pyrimidine + H(+) = thiamine phosphate + diphosphate. It participates in cofactor biosynthesis; thiamine diphosphate biosynthesis; thiamine phosphate from 4-amino-2-methyl-5-diphosphomethylpyrimidine and 4-methyl-5-(2-phosphoethyl)-thiazole: step 1/1. In terms of biological role, condenses 4-methyl-5-(beta-hydroxyethyl)thiazole monophosphate (THZ-P) and 2-methyl-4-amino-5-hydroxymethyl pyrimidine pyrophosphate (HMP-PP) to form thiamine monophosphate (TMP). This Desulfitobacterium hafniense (strain Y51) protein is Thiamine-phosphate synthase.